The primary structure comprises 470 residues: MTEPSFNTSALIEESIKSAKINVGAKLVLAYSGGVDSEVLAQGLSLYAKSHPEFRYLLVHVHHGLSRNADAWVTHCQKQALDYQLPIEVVQVQVKTGPRLSIEAEARRARYKAITSLMDSADVLLTAHHLDDQLETVLLALKRGLGPKGLSAMGALQVFDGDKQLLRPLLNVSREQIEAKAASLSLPHIEDESNTDDKYDRNFLRLQIIPKLKSRWSAIATTASRSAALCAQQQAVIDDEVSARLPNFIELVPYGEGTALNLDLLSHQTPNWQALLLRGYIESSGFAPVSQIQLEQLLSQLLTAKPDANLEVRIADMLVRRFREKAYLSSYRPHKPKSLESIELTLESEVHFVQEINIPLLSNIRVEVLEDDGGERVRLPLIEEKVSVRFSAVGSLRCHPHNRQKGRELKKLWQEYGVPPWERERVPLIFYNEKLVCAVGYWVEHSFQSAEHETGLRFSIAIVSNECESI.

Position 32 to 37 (32 to 37) interacts with ATP; it reads SGGVDS.

The protein belongs to the tRNA(Ile)-lysidine synthase family.

The protein localises to the cytoplasm. It catalyses the reaction cytidine(34) in tRNA(Ile2) + L-lysine + ATP = lysidine(34) in tRNA(Ile2) + AMP + diphosphate + H(+). Its function is as follows. Ligates lysine onto the cytidine present at position 34 of the AUA codon-specific tRNA(Ile) that contains the anticodon CAU, in an ATP-dependent manner. Cytidine is converted to lysidine, thus changing the amino acid specificity of the tRNA from methionine to isoleucine. The polypeptide is tRNA(Ile)-lysidine synthase (Shewanella woodyi (strain ATCC 51908 / MS32)).